Consider the following 72-residue polypeptide: UPF0352 protein Shal_2512 (72 aa).

Belongs to the UPF0352 family.

The sequence is that of UPF0352 protein Shal_2512 from Shewanella halifaxensis (strain HAW-EB4).